Consider the following 227-residue polypeptide: UPF0173 metal-dependent hydrolase Saci_1512 (227 aa).

The protein belongs to the UPF0173 family.

The polypeptide is UPF0173 metal-dependent hydrolase Saci_1512 (Sulfolobus acidocaldarius (strain ATCC 33909 / DSM 639 / JCM 8929 / NBRC 15157 / NCIMB 11770)).